A 396-amino-acid chain; its full sequence is MAKEKFDRSKSHANIGTIGHVDHGKTTLTAAISTVLHKKSGKGTAMAYDQIDGAPEERERGITISTAHVEYETETRHYAHVDCPGHADYVKNMITGAAQMDGAILVVSAADGPMPQTREHILLSRNVGVPYIVVFLNKCDMVDDEELLELVEMEVRDLLSDYDFPGDDVPVIKGSALKALEGDADYEAKIFELMDAVDEYIPTPERDTEKPFMMPVEDVFSITGRGTVATGRVERGQVKVGDEVEIIGLQEENGKTTVTGVEMFRKLLDYAEAGDNIGALLRGVSREDIQRGQVLAKPGTITPHSRFKAEVYVLSKEEGGRHTPFFANYRPQFYFRTTDVTGIVHLPEGTEMVMPGDNTEMEVELISTIAIEEGTRFSIREGGRTVGSGVVSSIIK.

Residues 10–205 (KSHANIGTIG…AVDEYIPTPE (196 aa)) enclose the tr-type G domain. A G1 region spans residues 19–26 (GHVDHGKT). Residue 19–26 (GHVDHGKT) coordinates GTP. Mg(2+) is bound at residue Thr26. The segment at 61 to 65 (GITIS) is G2. The tract at residues 82-85 (DCPG) is G3. GTP is bound by residues 82-86 (DCPGH) and 137-140 (NKCD). The segment at 137-140 (NKCD) is G4. Residues 175–177 (SAL) are G5.

This sequence belongs to the TRAFAC class translation factor GTPase superfamily. Classic translation factor GTPase family. EF-Tu/EF-1A subfamily. In terms of assembly, monomer.

It is found in the cytoplasm. It catalyses the reaction GTP + H2O = GDP + phosphate + H(+). GTP hydrolase that promotes the GTP-dependent binding of aminoacyl-tRNA to the A-site of ribosomes during protein biosynthesis. The protein is Elongation factor Tu of Bacillus pumilus (strain SAFR-032).